A 456-amino-acid chain; its full sequence is Multidrug resistance protein NorM (456 aa).

12 consecutive transmembrane segments (helical) span residues 11–31 (LIKL…MGFV), 53–73 (IWLP…PVVA), 92–112 (VVLA…TQFI), 126–146 (TVGY…FQTL), 159–179 (AMVI…IFVY), 189–209 (GVGC…LLLA), 242–262 (FPVA…ALLV), 268–288 (IIVA…MLPM), 314–334 (SRVG…ITVL), 356–376 (LLLF…AAGA), 385–405 (AIFN…GYIL), and 417–437 (AQGF…MLGV).

The protein belongs to the multi antimicrobial extrusion (MATE) (TC 2.A.66.1) family.

The protein localises to the cell inner membrane. Its function is as follows. Multidrug efflux pump that functions as a Na(+)/drug antiporter. Confers resistance to several drugs, such as norfloxacin, ciprofloxacin, ethidium, kanamycin and streptomycin. The sequence is that of Multidrug resistance protein NorM (norM) from Vibrio parahaemolyticus serotype O3:K6 (strain RIMD 2210633).